The chain runs to 427 residues: UDP-N-acetylglucosamine 1-carboxyvinyltransferase (427 aa).

A phosphoenolpyruvate-binding site is contributed by 22-23; that stretch reads KN. A UDP-N-acetyl-alpha-D-glucosamine-binding site is contributed by R99. The active-site Proton donor is C123. C123 is subject to 2-(S-cysteinyl)pyruvic acid O-phosphothioketal. UDP-N-acetyl-alpha-D-glucosamine contacts are provided by residues 128 to 132, D313, and I335; that span reads RPIDL.

The protein belongs to the EPSP synthase family. MurA subfamily.

The protein localises to the cytoplasm. The catalysed reaction is phosphoenolpyruvate + UDP-N-acetyl-alpha-D-glucosamine = UDP-N-acetyl-3-O-(1-carboxyvinyl)-alpha-D-glucosamine + phosphate. The protein operates within cell wall biogenesis; peptidoglycan biosynthesis. Its function is as follows. Cell wall formation. Adds enolpyruvyl to UDP-N-acetylglucosamine. This Sphingopyxis alaskensis (strain DSM 13593 / LMG 18877 / RB2256) (Sphingomonas alaskensis) protein is UDP-N-acetylglucosamine 1-carboxyvinyltransferase.